A 727-amino-acid polypeptide reads, in one-letter code: Non-structural protein 4 (727 aa).

Disordered stretches follow at residues 1-38 (MNQS…PSEG) and 671-727 (GNSM…KLSK). The segment covering 17 to 38 (RTPSALSSNSETPGSMSSPSEG) has biased composition (polar residues). Residues 712-727 (SRRKARKARAASKLSK) show a composition bias toward basic residues.

In Rice dwarf virus (isolate Fujian) (RDV), this protein is Non-structural protein 4.